Here is a 361-residue protein sequence, read N- to C-terminus: MYRPIRALIDCTALQHNLSVVRSHTRQARIMAVVKADAYGHGLLRTTQALNTADGFAVLELEAAIQLREAGFNQPVLLLEGFFSAEELEAIDHYQLSTVIHSHEQLSLLLAHRKTGKPDIYLKINTGMNRLGFRPEEESYVFNRIRQWRSDTSITLMTHFSCADDALEADQVNQQLDQFAALHDVKENNLPQTLANSAAILRYPGTHADWVRPGIVLYGASPLPDKTGIELGLRPVMTLTSQIIAVQQLDPSDRVGYGGQFIANQPMRIGVVAAGYADGYPRHAPTGTPVLVNGQRTRLVGRISMDMLTVDLNGISEAGVGSPVTLWGEGLPVEEVAKSAQTISYELLTALSPRVPSISIS.

Lysine 35 serves as the catalytic Proton acceptor; specific for D-alanine. N6-(pyridoxal phosphate)lysine is present on lysine 35. Arginine 130 is a binding site for substrate. The Proton acceptor; specific for L-alanine role is filled by tyrosine 257. Methionine 305 is a substrate binding site.

This sequence belongs to the alanine racemase family. Pyridoxal 5'-phosphate is required as a cofactor.

The catalysed reaction is L-alanine = D-alanine. It functions in the pathway amino-acid biosynthesis; D-alanine biosynthesis; D-alanine from L-alanine: step 1/1. Catalyzes the interconversion of L-alanine and D-alanine. May also act on other amino acids. In Nitrosomonas eutropha (strain DSM 101675 / C91 / Nm57), this protein is Alanine racemase (alr).